A 46-amino-acid chain; its full sequence is Iota-conotoxin-like R11.17 (46 aa).

A 4-hydroxyproline mark is found at Pro-2 and Pro-11. Intrachain disulfides connect Cys-5/Cys-19, Cys-12/Cys-22, Cys-18/Cys-27, and Cys-21/Cys-38. Position 29 is a 4-hydroxyproline (Pro-29). Phe-44 bears the D-phenylalanine mark.

The protein belongs to the conotoxin I1 superfamily. As to expression, expressed by the venom duct.

Its subcellular location is the secreted. Its function is as follows. Iota-conotoxins bind to voltage-gated sodium channels (Nav) and act as agonists by shifting the voltage-dependence of activation to more hyperpolarized levels. Produces general excitatory symptoms. This chain is Iota-conotoxin-like R11.17, found in Conus radiatus (Rayed cone).